The chain runs to 347 residues: Protein pelota homolog (347 aa).

Belongs to the eukaryotic release factor 1 family. Pelota subfamily. Monomer. The cofactor is a divalent metal cation.

Its subcellular location is the cytoplasm. In terms of biological role, may function in recognizing stalled ribosomes, interact with stem-loop structures in stalled mRNA molecules, and effect endonucleolytic cleavage of the mRNA. May play a role in the release non-functional ribosomes and degradation of damaged mRNAs. Has endoribonuclease activity. In Methanococcoides burtonii (strain DSM 6242 / NBRC 107633 / OCM 468 / ACE-M), this protein is Protein pelota homolog.